The primary structure comprises 193 residues: Non-specific lipid transfer protein GPI-anchored 10 (193 aa).

The first 24 residues, 1-24, serve as a signal peptide directing secretion; it reads MASSTLLITLLISLSAFFLRMVLA. 4 disulfides stabilise this stretch: Cys30/Cys71, Cys40/Cys55, Cys56/Cys98, and Cys69/Cys107. 3 N-linked (GlcNAc...) asparagine glycosylation sites follow: Asn76, Asn87, and Asn103. Residues 109–140 are disordered; it reads SSFPGEAPSDSSSVAPPPSSSTGSQISQGAKN. Low complexity predominate over residues 116-132; it reads PSDSSSVAPPPSSSTGS. The N-linked (GlcNAc...) asparagine glycan is linked to Asn140. The GPI-anchor amidated serine moiety is linked to residue Ser168. The propeptide at 169–193 is removed in mature form; that stretch reads SGSKSEIQLTIFALAAILPAALLLI.

It belongs to the plant LTP family.

The protein resides in the cell membrane. Functionally, probable lipid transfer protein. In Arabidopsis thaliana (Mouse-ear cress), this protein is Non-specific lipid transfer protein GPI-anchored 10.